The sequence spans 331 residues: Meiotic recombination protein P22 (331 aa).

The disordered stretch occupies residues 132–187 (NNIQKEVHQRNSQRRSIQCTPKKRGRKPKQPAKKLQSRISTDQLGSTPSPSKLPAK). Over residues 152 to 167 (PKKRGRKPKQPAKKLQ) the composition is skewed to basic residues. A compositionally biased stretch (polar residues) spans 168 to 181 (SRISTDQLGSTPSP).

The protein belongs to the TOP6B-like family.

The protein resides in the chromosome. Functionally, required for formation of the mei-W68-mediated double-strand breaks (DSBs) that initiate meiotic recombination. The protein is Meiotic recombination protein P22 of Drosophila melanogaster (Fruit fly).